Consider the following 310-residue polypeptide: Oxygen-dependent coproporphyrinogen-III oxidase (310 aa).

Residue Ser-97 coordinates substrate. Positions 101 and 111 each coordinate a divalent metal cation. His-111 (proton donor) is an active-site residue. Residue 113–115 (NFR) coordinates substrate. A divalent metal cation-binding residues include His-150 and His-180. An important for dimerization region spans residues 245–280 (YVEFNLLYDRGTRFGLEFGGRTESILMSLPPRVVWR). 263 to 265 (GGR) contacts substrate.

This sequence belongs to the aerobic coproporphyrinogen-III oxidase family. Homodimer. Requires a divalent metal cation as cofactor.

The protein resides in the cytoplasm. The catalysed reaction is coproporphyrinogen III + O2 + 2 H(+) = protoporphyrinogen IX + 2 CO2 + 2 H2O. The protein operates within porphyrin-containing compound metabolism; protoporphyrin-IX biosynthesis; protoporphyrinogen-IX from coproporphyrinogen-III (O2 route): step 1/1. Functionally, involved in the heme biosynthesis. Catalyzes the aerobic oxidative decarboxylation of propionate groups of rings A and B of coproporphyrinogen-III to yield the vinyl groups in protoporphyrinogen-IX. In Coxiella burnetii (strain Dugway 5J108-111), this protein is Oxygen-dependent coproporphyrinogen-III oxidase.